The primary structure comprises 484 residues: Glutamate--tRNA ligase (484 aa).

Positions 10-20 (PSPTGYLHVGG) match the 'HIGH' region motif. A 'KMSKS' region motif is present at residues 252–256 (KLSKR). K255 serves as a coordination point for ATP.

Belongs to the class-I aminoacyl-tRNA synthetase family. Glutamate--tRNA ligase type 1 subfamily. Monomer.

The protein resides in the cytoplasm. It catalyses the reaction tRNA(Glu) + L-glutamate + ATP = L-glutamyl-tRNA(Glu) + AMP + diphosphate. Its function is as follows. Catalyzes the attachment of glutamate to tRNA(Glu) in a two-step reaction: glutamate is first activated by ATP to form Glu-AMP and then transferred to the acceptor end of tRNA(Glu). This Mycoplasma genitalium (strain ATCC 33530 / DSM 19775 / NCTC 10195 / G37) (Mycoplasmoides genitalium) protein is Glutamate--tRNA ligase.